Reading from the N-terminus, the 112-residue chain is Signal peptidase complex-like protein DTM1 (112 aa).

The N-terminal stretch at 1-25 (MGRDEMLRRSLVALAAAVVVTGVVT) is a signal peptide. Helical transmembrane passes span 33–53 (ATYG…WEFF) and 92–112 (MAML…YVSS).

Belongs to the SPCS1 family.

The protein resides in the endoplasmic reticulum membrane. Functions in tapetum development during early meiosis. May play a role in the endoplasmic reticulum (ER) membrane in the early stages of tapetum development in anthers. Seems to function after MSP1 and before UDT1. This chain is Signal peptidase complex-like protein DTM1, found in Oryza sativa subsp. japonica (Rice).